The following is a 211-amino-acid chain: UPF0329 protein ECU07_1880/ECU10_0020 (211 aa).

Belongs to the UPF0329 family.

This is UPF0329 protein ECU07_1880/ECU10_0020 from Encephalitozoon cuniculi (strain GB-M1) (Microsporidian parasite).